The chain runs to 400 residues: ATP-dependent RNA helicase fal-1 (400 aa).

The Q motif motif lies at 26 to 54 (PTFESMSLKESLLRGIYAYGYESPSAVQS). The 171-residue stretch at 57–227 (IVQICKGRDT…TKFMTDPVRI (171 aa)) folds into the Helicase ATP-binding domain. 70 to 77 (AQSGTGKT) serves as a coordination point for ATP. Residues 175–178 (DEAD) carry the DEAD box motif. Positions 238 to 399 (GLKQYFIAVE…EMPMNVADLI (162 aa)) constitute a Helicase C-terminal domain.

Belongs to the DEAD box helicase family. DDX48/FAL1 subfamily.

It localises to the nucleus. The protein localises to the nucleolus. The enzyme catalyses ATP + H2O = ADP + phosphate + H(+). ATP-dependent RNA helicase involved in 40S ribosomal subunit biogenesis. Required for the processing and cleavage of 35S pre-rRNA at sites A0, A1, and A2, leading to mature 18S rRNA. The polypeptide is ATP-dependent RNA helicase fal-1 (fal-1) (Neurospora crassa (strain ATCC 24698 / 74-OR23-1A / CBS 708.71 / DSM 1257 / FGSC 987)).